Here is a 606-residue protein sequence, read N- to C-terminus: Anthranilate synthase alpha subunit 2, chloroplastic (606 aa).

The transit peptide at M1–R49 directs the protein to the chloroplast.

This sequence belongs to the anthranilate synthase component I family. Heterotetramer consisting of two non-identical subunits: a beta subunit and a large alpha subunit.

Its subcellular location is the plastid. It localises to the chloroplast. The enzyme catalyses chorismate + L-glutamine = anthranilate + pyruvate + L-glutamate + H(+). The protein operates within amino-acid biosynthesis; L-tryptophan biosynthesis; L-tryptophan from chorismate: step 1/5. Its activity is regulated as follows. Feedback inhibition by tryptophan. Part of a heterotetrameric complex that catalyzes the two-step biosynthesis of anthranilate, an intermediate in the biosynthesis of L-tryptophan. In the first step, the glutamine-binding beta subunit of anthranilate synthase (AS) provides the glutamine amidotransferase activity which generates ammonia as a substrate that, along with chorismate, is used in the second step, catalyzed by the large alpha subunit of AS to produce anthranilate. The chain is Anthranilate synthase alpha subunit 2, chloroplastic from Oryza sativa subsp. japonica (Rice).